A 337-amino-acid chain; its full sequence is CMRF35-like molecule 1 (337 aa).

Positions 1–19 (MHLSLLVPFLFWITGCCTA) are cleaved as a signal peptide. Residues 20-125 (EDPVTGPEEV…LDPMFKVTVN (106 aa)) form the Ig-like V-type domain. Topologically, residues 20–193 (EDPVTGPEEV…GVGDGFLDLS (174 aa)) are extracellular. The tract at residues 39–45 (VQCRYTS) is plays an important role in murine norovirus (MNV) binding. 2 cysteine pairs are disulfide-bonded: Cys41-Cys109 and Cys55-Cys63. Residues 194-214 (VLLPVISAVLLLLLLVASLFA) traverse the membrane as a helical segment. At 215–337 (WRMVRRQKKA…IRRPLPAAMP (123 aa)) the chain is on the cytoplasmic side. 2 disordered regions span residues 248–270 (QPRT…GKDH) and 318–337 (LEEE…AAMP). A compositionally biased stretch (low complexity) spans 252–266 (SPGSSWKKGSSMSSS).

Belongs to the CD300 family. In terms of assembly, interacts with PTPN6/SHP-1 in a tyrosine phosphorylation dependent manner. Interacts with IL4R. Phosphorylated on tyrosine. In terms of tissue distribution, expressed in myeloid cells. Present on the surface of macrophages (at protein level). Highly expressed by alveolar, splenic macrophages and bone marrow-derived dendritic cells. Expression is increased following aeroallergen challenge in macrophages, mast cells, and eosinophils.

The protein resides in the cell membrane. Its function is as follows. Acts as an inhibitory receptor for myeloid cells and mast cells. Positively regulates the phagocytosis of apoptotic cells (efferocytosis) via phosphatidylserine (PS) recognition; recognizes and binds PS as a ligand which is expressed on the surface of apoptotic cells. Plays an important role in the maintenance of immune homeostasis, by promoting macrophage-mediated efferocytosis and by inhibiting dendritic cell-mediated efferocytosis. Negatively regulates Fc epsilon receptor-dependent mast cell activation and allergic responses via binding to ceramide which acts as a ligand. May act as a coreceptor for interleukin 4 (IL-4). Associates with and regulates IL-4 receptor alpha-mediated responses by augmenting IL-4- and IL-13-induced signaling. Negatively regulates the Toll-like receptor (TLR) signaling mediated by MYD88 and TRIF through activation of PTPN6/SHP-1 and PTPN11/SHP-2. Inhibits osteoclast formation. Induces macrophage cell death upon engagement. In terms of biological role, (Microbial infection) Acts as a functional receptor for murine norovirus (MNV). Mediates binding to the cell surface and is both necessary and sufficient for viral entry and replication. This interaction requires Mg(2+) and Ca(2+) and is enhanced by bile acids. Primary determinant of MNV species tropism and is sufficient to render cells permissive to infection by MNV. Can render nonmurine mammalian cells susceptible to MNV infection. This chain is CMRF35-like molecule 1 (Cd300lf), found in Mus musculus (Mouse).